We begin with the raw amino-acid sequence, 34 residues long: Photosystem II reaction center protein M (34 aa).

Residues 5–25 (ILAFIATALFISIPTAFLLIP) form a helical membrane-spanning segment.

This sequence belongs to the PsbM family. PSII is composed of 1 copy each of membrane proteins PsbA, PsbB, PsbC, PsbD, PsbE, PsbF, PsbH, PsbI, PsbJ, PsbK, PsbL, PsbM, PsbT, PsbX, PsbY, PsbZ, Psb30/Ycf12, at least 3 peripheral proteins of the oxygen-evolving complex and a large number of cofactors. It forms dimeric complexes.

Its subcellular location is the plastid. It is found in the chloroplast thylakoid membrane. One of the components of the core complex of photosystem II (PSII). PSII is a light-driven water:plastoquinone oxidoreductase that uses light energy to abstract electrons from H(2)O, generating O(2) and a proton gradient subsequently used for ATP formation. It consists of a core antenna complex that captures photons, and an electron transfer chain that converts photonic excitation into a charge separation. This subunit is found at the monomer-monomer interface. The sequence is that of Photosystem II reaction center protein M from Psilotum nudum (Whisk fern).